A 263-amino-acid polypeptide reads, in one-letter code: MDISKIDLKADEKAVTKSIFKATYEMWMDNLEVDVVIVGGGPSGLTAGRYLADAGVKVLILERHLSFGGGTWGGGMGCPYITVQSPADEILSEVGIKLEEGEDGLFVADSVEVPAKLGTGAIDAGAKVLTGIVVEDVILKEGKVSGVVINSYAINKAGLHIDPLTINAKYVIDATGHDASVACTLARKNEDLGLVIPGEKSLWADEGENGLLKYTKELFPGLFVCGMASNATHGGYRMGAVFGGMYISGKIVADMILEKLKNE.

NAD(+)-binding positions include serine 43, 62 to 63, glycine 70, valine 134, and 160 to 162; these read ER and HID. Fe cation is bound by residues aspartate 162 and histidine 177. NAD(+)-binding residues include serine 180 and methionine 227. Arginine 237 lines the glycine pocket.

This sequence belongs to the THI4 family. Homooctamer; tetramer of dimers. Fe(2+) serves as cofactor.

The enzyme catalyses hydrogen sulfide + glycine + NAD(+) = ADP-5-ethyl-4-methylthiazole-2-carboxylate + nicotinamide + 3 H2O + H(+). It participates in cofactor biosynthesis; thiamine diphosphate biosynthesis. Functionally, involved in the biosynthesis of the thiazole moiety of thiamine. Catalyzes the conversion of NAD and glycine to adenosine diphosphate 5-(2-hydroxyethyl)-4-methylthiazole-2-carboxylate (ADT), an adenylated thiazole intermediate, using free sulfide as a source of sulfur. This is Thiamine thiazole synthase from Methanococcus aeolicus (strain ATCC BAA-1280 / DSM 17508 / OCM 812 / Nankai-3).